Reading from the N-terminus, the 63-residue chain is Large ribosomal subunit protein bL28 (63 aa).

This sequence belongs to the bacterial ribosomal protein bL28 family.

The protein is Large ribosomal subunit protein bL28 of Alkaliphilus metalliredigens (strain QYMF).